Consider the following 527-residue polypeptide: Cytokinin dehydrogenase 3 (527 aa).

The signal sequence occupies residues 1 to 22 (MEVAMVCTRVNLLILILSLCSP). The FAD-binding PCMH-type domain maps to 52 to 231 (LFHSPSAVLK…TRARILLQEA (180 aa)). FAD-binding residues include alanine 87, glycine 89, and glycine 91. Histidine 92 is subject to Pros-8alpha-FAD histidine. FAD is bound by residues serine 93, glutamine 97, aspartate 155, threonine 160, serine 166, isoleucine 170, and isoleucine 221. Asparagine 413 carries an N-linked (GlcNAc...) asparagine glycan. Residues tyrosine 471 and glutamine 509 each contribute to the FAD site.

The protein belongs to the oxygen-dependent FAD-linked oxidoreductase family. As to quaternary structure, monomer. Requires FAD as cofactor. In terms of tissue distribution, expressed in inflorescence meristems. Highly expressed in lamina joints, and mainly in the parenchyma cells and vascular bundles on the abaxial side of the lamina joint. Expressed in roots, stems, leaves and young panicles.

Its subcellular location is the endoplasmic reticulum. The enzyme catalyses N(6)-dimethylallyladenine + A + H2O = 3-methyl-2-butenal + adenine + AH2. Catalyzes the oxidation of cytokinins, a family of N(6)-substituted adenine derivatives, where the substituent is an isopentenyl group. Cytokinins are plant hormones essential for plant growth, development, and stress responses. Exhibits specific activities toward trans-zeatin (tZ) and isopentenyladenine (iP). Plays a role in lamina joint inclination. Regulates cell proliferation and vascular bundle number on the abaxial side of lamina joint. The sequence is that of Cytokinin dehydrogenase 3 from Oryza sativa subsp. japonica (Rice).